The chain runs to 107 residues: U1-lycotoxin-Ls1b (107 aa).

The signal sequence occupies residues M1–G20. Positions E21 to R41 are excised as a propeptide. Cystine bridges form between C44–C59, C51–C68, C58–C86, and C70–C84.

It belongs to the neurotoxin 19 (CSTX) family. 04 (U1-Lctx) subfamily. In terms of tissue distribution, expressed by the venom gland.

It localises to the secreted. The polypeptide is U1-lycotoxin-Ls1b (Lycosa singoriensis (Wolf spider)).